The sequence spans 212 residues: Peptide methionine sulfoxide reductase MsrA (212 aa).

Residue Cys-52 is part of the active site.

Belongs to the MsrA Met sulfoxide reductase family.

The enzyme catalyses L-methionyl-[protein] + [thioredoxin]-disulfide + H2O = L-methionyl-(S)-S-oxide-[protein] + [thioredoxin]-dithiol. It carries out the reaction [thioredoxin]-disulfide + L-methionine + H2O = L-methionine (S)-S-oxide + [thioredoxin]-dithiol. In terms of biological role, has an important function as a repair enzyme for proteins that have been inactivated by oxidation. Catalyzes the reversible oxidation-reduction of methionine sulfoxide in proteins to methionine. This chain is Peptide methionine sulfoxide reductase MsrA, found in Escherichia coli O6:K15:H31 (strain 536 / UPEC).